The following is a 510-amino-acid chain: MWKGFLSKLPRKTSASGRGADLDSGQCSNGAGNGNPIQRTSSCGSIPSGRSTSTIKRMSSAIFPSSVVAGIEPLVSFKDVPNSEKQNLFVSKLNLCCAVFDFSDPNKSSAEKDIKRQTLLDLIDYVDSSSSRFSEAVIAASSRMFAVNLFRVFPPNYRSSSSGGGEGEEEEPMFEPAWCHLQLVYELLLKFIGSSSLDAKVGKKYFDHSFIVKLLNLLDSEDPRERDCLKTILHRIYGKFMVHRPFIRKAVSNIFYHFVFETDRHNGIAELLEVFGSVISGFALPLKEEHKIFLWRVLVPLHKPKSVGVYLQQLTYCVTQFIEKDPKLASSVIIGLLRYWPITNSQKEVMFLSEIEEILETISTAEFQKCMVPLFRRIAQCIKSSHFQVAERALFIWNNDNVISLIAQNRQMIMPIIVPALEHNSQNHWNQAVLNLTDNVKKMFSEMDDVLFSACLVKYKEDEERQASLESKRRLTWEKLESAASFQPVTGHTAVLVGRQPSANLIATLI.

The disordered stretch occupies residues 1 to 51 (MWKGFLSKLPRKTSASGRGADLDSGQCSNGAGNGNPIQRTSSCGSIPSGRS). Residues 25 to 51 (GQCSNGAGNGNPIQRTSSCGSIPSGRS) show a composition bias toward polar residues. Residues T476 and T493 each carry the phosphothreonine modification. S502 bears the Phosphoserine mark. The residue at position 508 (T508) is a Phosphothreonine.

Belongs to the phosphatase 2A regulatory subunit B56 family. PP2A consists of a common heteromeric enzyme, composed of a catalytic subunit (subunits C), a constant regulatory subunit (subunit A), and a variety of regulatory subunits such as subunits B (the R2/B/PR55/B55, R3/B''/PR72/PR130/PR59 and R5/B'/B56 families). Interacts with SIT1. Phosphorylated at Thr-476, Thr-493, Ser-502 and Thr-508 by SIT1. As to expression, expressed in root stele and epidermal cells.

The protein resides in the cytoplasm. Its subcellular location is the cytosol. It localises to the cell membrane. Its function is as follows. B regulatory subunit of phosphatase 2A (PP2A) involved in salt stress response. Under salt stress conditions, required for the catalytic activity of PP2A and the dephosphorylation of SIT1, a negative regulator of salt tolerance. Dephosphorylation of SIT1 turns off salt-induced SIT1 activity directly, which has a positive effect on salt tolerance. In Oryza sativa subsp. japonica (Rice), this protein is Serine/threonine protein phosphatase 2A 57 kDa regulatory subunit B' kappa isoform.